Consider the following 365-residue polypeptide: Selina-4(15),7(11)-diene synthase ((2E,6E)-farnesyl diphosphate cyclizing) (365 aa).

Residues Asp82 and Glu87 each contribute to the Mg(2+) site. The short motif at 82-87 (DDGHCE) is the DDXXXE motif element. Position 178 (Arg178) interacts with substrate. Positions 224 and 228 each coordinate Mg(2+). Residue Lys231 participates in substrate binding. Glu232 is a binding site for Mg(2+). Residue 310 to 311 (RY) coordinates substrate.

It belongs to the terpene synthase family. Monomer. It depends on Mg(2+) as a cofactor.

The enzyme catalyses (2E,6E)-farnesyl diphosphate = selina-4(15),7(11)-diene + diphosphate. It participates in secondary metabolite biosynthesis; terpenoid biosynthesis. Its function is as follows. Catalyzes the conversion of (2E,6E)-farnesyl diphosphate (FPP) to yield the bicyclic sesquiterpene selina-4(15),7(11)-diene via a 1,10-cyclization, which requires the abstraction of the pyrophosphate from FPP leading to a (E,E)-germacradienyl cation. The only accepted substrate is (2E,6E)-farnesyl diphosphate (FPP). The protein is Selina-4(15),7(11)-diene synthase ((2E,6E)-farnesyl diphosphate cyclizing) of Streptomyces pristinaespiralis (strain ATCC 25486 / DSM 40338 / CBS 914.69 / JCM 4507 / KCC S-0507 / NBRC 13074 / NRRL 2958 / 5647).